We begin with the raw amino-acid sequence, 1411 residues long: Tectonin beta-propeller repeat-containing protein 2 (1411 aa).

WD repeat units follow at residues 23–66, 67–114, 115–161, 162–203, 204–265, 266–309, and 310–343; these read IPTK…HLNQ, MRKY…PGRN, KQLR…LDQG, LCNS…EKSV, RQIG…AGGV, KPFE…EYSI, and YLLD…FFLK. Disordered regions lie at residues 379–439, 463–542, 579–637, and 758–779; these read QAEK…GSQP, VKRK…QENT, RELL…GPQS, and YAHG…PSCS. Low complexity predominate over residues 400 to 420; sequence SSVASEPRSRSSSLNSTDSGS. Composition is skewed to polar residues over residues 475-489, 496-542, 608-621, and 763-779; these read GSRS…STPC, SPQS…QENT, PNST…QDSS, and PSSS…PSCS. 6 TECPR repeats span residues 945 to 976, 994 to 1027, 1179 to 1209, 1226 to 1259, 1279 to 1310, and 1322 to 1353; these read NVVW…KCDI, QTLW…WQVS, DALW…TRLD, QHIW…IMIE, QMLW…EHVP, and RTVW…KKIP. Positions 1388 to 1411 are disordered; it reads HGTQKSSQAAMPHPEDLEDEWEVI.

It belongs to the WD repeat KIAA0329 family. In terms of assembly, interacts with the ATG8 family members GABARAP, GABARAPL1, GABARAPL2, MAP1LC3B and MAP1LC3C. As to expression, detected in skin fibroblast (at protein level).

Its function is as follows. Probably plays a role as positive regulator of autophagy. This Homo sapiens (Human) protein is Tectonin beta-propeller repeat-containing protein 2 (TECPR2).